A 267-amino-acid polypeptide reads, in one-letter code: Energy-coupling factor transporter transmembrane protein EcfT (267 aa).

5 helical membrane passes run 30-50 (FWYV…LLVA), 67-87 (WAGL…QVLF), 110-130 (ALVI…LTAT), 152-172 (VPVN…PTIM), and 247-267 (SIAL…RILL).

It belongs to the energy-coupling factor EcfT family. As to quaternary structure, forms a stable energy-coupling factor (ECF) transporter complex composed of 2 membrane-embedded substrate-binding proteins (S component), 2 ATP-binding proteins (A component) and 2 transmembrane proteins (T component). May be able to interact with more than 1 S component at a time.

The protein localises to the cell membrane. Functionally, transmembrane (T) component of an energy-coupling factor (ECF) ABC-transporter complex. Unlike classic ABC transporters this ECF transporter provides the energy necessary to transport a number of different substrates. This chain is Energy-coupling factor transporter transmembrane protein EcfT, found in Limosilactobacillus fermentum (strain CECT 5716 / Lc40) (Lactobacillus fermentum).